Consider the following 319-residue polypeptide: Pantothenate kinase (319 aa).

97 to 104 contacts ATP; sequence GSVAVGKS.

The protein belongs to the prokaryotic pantothenate kinase family.

It is found in the cytoplasm. It carries out the reaction (R)-pantothenate + ATP = (R)-4'-phosphopantothenate + ADP + H(+). Its pathway is cofactor biosynthesis; coenzyme A biosynthesis; CoA from (R)-pantothenate: step 1/5. The polypeptide is Pantothenate kinase (Mesorhizobium japonicum (strain LMG 29417 / CECT 9101 / MAFF 303099) (Mesorhizobium loti (strain MAFF 303099))).